Reading from the N-terminus, the 361-residue chain is Phosphoserine aminotransferase (361 aa).

R43 lines the L-glutamate pocket. Pyridoxal 5'-phosphate is bound by residues 77 to 78, W103, T153, D173, and Q196; that span reads AS. K197 carries the N6-(pyridoxal phosphate)lysine modification. 238–239 is a binding site for pyridoxal 5'-phosphate; it reads NT.

The protein belongs to the class-V pyridoxal-phosphate-dependent aminotransferase family. SerC subfamily. Homodimer. Pyridoxal 5'-phosphate is required as a cofactor.

It localises to the cytoplasm. It catalyses the reaction O-phospho-L-serine + 2-oxoglutarate = 3-phosphooxypyruvate + L-glutamate. It carries out the reaction 4-(phosphooxy)-L-threonine + 2-oxoglutarate = (R)-3-hydroxy-2-oxo-4-phosphooxybutanoate + L-glutamate. Its pathway is amino-acid biosynthesis; L-serine biosynthesis; L-serine from 3-phospho-D-glycerate: step 2/3. The protein operates within cofactor biosynthesis; pyridoxine 5'-phosphate biosynthesis; pyridoxine 5'-phosphate from D-erythrose 4-phosphate: step 3/5. Functionally, catalyzes the reversible conversion of 3-phosphohydroxypyruvate to phosphoserine and of 3-hydroxy-2-oxo-4-phosphonooxybutanoate to phosphohydroxythreonine. This is Phosphoserine aminotransferase from Pseudomonas entomophila (strain L48).